The chain runs to 143 residues: MTEPRTPEKLLAAKPPVLHHNSHSPNASLQLPSPIITRRTRTASTSARALENPVVTGMVKSFSRTKGHGFITPNAGGEDVFCHVSDIEGEYVPMPGDEVKYRLCAIPPKYEKHQAVHVQISHLTPEVHHKWEEPFYGGSSPAK.

Residues Met-1–Gln-30 form a disordered region. Phosphoserine occurs at positions 22, 24, 28, and 33. A CSD domain is found at Val-54 to Ser-121. A phosphoserine mark is found at Ser-139 and Ser-140.

The sequence is that of Cold shock domain-containing protein CG9705 from Drosophila melanogaster (Fruit fly).